Reading from the N-terminus, the 127-residue chain is MKVLEGLKYSKEHEWVKVLEDNKVSVGITDFAQDELGDIVFVNLPAVGQEIKVGETLASLESVKSASDVYSPVSGKVVEVNEKLKNSPEIINDDPYGEGWIAVIELSDVSVLDTLMSAEEYKQFIGE.

One can recognise a Lipoyl-binding domain in the interval 23–105; the sequence is KVSVGITDFA…YGEGWIAVIE (83 aa). Lysine 64 is subject to N6-lipoyllysine.

The protein belongs to the GcvH family. As to quaternary structure, the glycine cleavage system is composed of four proteins: P, T, L and H. Requires (R)-lipoate as cofactor.

Functionally, the glycine cleavage system catalyzes the degradation of glycine. The H protein shuttles the methylamine group of glycine from the P protein to the T protein. This is Glycine cleavage system H protein from Coprothermobacter proteolyticus (strain ATCC 35245 / DSM 5265 / OCM 4 / BT).